The chain runs to 325 residues: MQDTYQREINYLRISVTDRCNLRCVYCMPEEGVRSLPHGEILRLEEIETVVRAAALTGVKKIRLTGGEPLVRKGLEELVRRVSGIPGIDDIALTTNGLLLPSRAKALKEAGVKRVNVSLDTLRADRYAEITRGGNLAGAWEGIQSALDAGLHPVKLNTVIIRGFNEDEVVAMAMLTINRPLHVRFIELMPIGSSSSWAAGRYVPAAEVMDAISAKLGPLVPARQPAGGGPAKYYRLKDAAGTVGFITSMSEHFCHRCNRLRLTASGGLRPCLYDGREIDLKAPLREGAGTREIAALIMEAIALKPDRHHMLEGWRDRRQMSQIGG.

One can recognise a Radical SAM core domain in the interval T4 to L219. R13 is a GTP binding site. Positions 20 and 24 each coordinate [4Fe-4S] cluster. Y26 is an S-adenosyl-L-methionine binding site. C27 is a binding site for [4Fe-4S] cluster. Residue R63 coordinates GTP. G67 provides a ligand contact to S-adenosyl-L-methionine. T94 lines the GTP pocket. S118 lines the S-adenosyl-L-methionine pocket. Position 155 (K155) interacts with GTP. M189 contacts S-adenosyl-L-methionine. 2 residues coordinate [4Fe-4S] cluster: C254 and C257. R259–R261 contributes to the GTP binding site. Residue C271 participates in [4Fe-4S] cluster binding.

The protein belongs to the radical SAM superfamily. MoaA family. Monomer and homodimer. It depends on [4Fe-4S] cluster as a cofactor.

The enzyme catalyses GTP + AH2 + S-adenosyl-L-methionine = (8S)-3',8-cyclo-7,8-dihydroguanosine 5'-triphosphate + 5'-deoxyadenosine + L-methionine + A + H(+). It functions in the pathway cofactor biosynthesis; molybdopterin biosynthesis. Catalyzes the cyclization of GTP to (8S)-3',8-cyclo-7,8-dihydroguanosine 5'-triphosphate. The sequence is that of GTP 3',8-cyclase from Pelotomaculum thermopropionicum (strain DSM 13744 / JCM 10971 / SI).